Here is a 130-residue protein sequence, read N- to C-terminus: 3-aminoacrylate deaminase RutC (130 aa).

This sequence belongs to the RutC family.

It carries out the reaction (Z)-3-aminoacrylate + H2O + H(+) = 3-oxopropanoate + NH4(+). Functionally, involved in pyrimidine catabolism. Catalyzes the deamination of 3-aminoacrylate to malonic semialdehyde, a reaction that can also occur spontaneously. RutC may facilitate the reaction and modulate the metabolic fitness, rather than catalyzing essential functions. The protein is 3-aminoacrylate deaminase RutC of Klebsiella pneumoniae (strain 342).